The primary structure comprises 554 residues: MALTICTRFTDEYQLFEELGKGAFSVVRRCVKISSGQEYAAKIINTKKLSARDHQKLEREARICRLLKHPNIVRLHDSISEEGFHYLVFDLVTGGELFEDIVAREYYSEADASHCIQQILESVHHCHVNGIVHRDLKPENLLLASKMKGAAVKLADFGLAIEVQGDQQAWFGFAGTPGYLSPEVLRKDPYGKPVDMWACGVILYILLVGYPPFWDEDQHRLYQQIKAGAYDFPSPEWDTVTPEAKDLINKMLTINPSKRITAAEAPKHPWICQRSTVASMMHRQETVECLKKFNARRKLKGAILTTLLVTRNFSAAKSLLNKKPDGVKVNNKTNLASSPKDTGPAPALEPQTTVIHNPVDRNKESTESANTTIEDEDLKARRFGNLSINSIWQPSVGRPQNSEPKQAPNSSVQTCQVINKARKQEIIKVTEQLIESINNGDFEAYAKICDPGLTSFEPEALGNLVEGHDFHRFYFENALSKGNKPVHTILLNPHVHLIGEDAACIAYIRLTQYMDGSGMPRTMQSEETRVWHRRDGKWLNIHFHRSGAPSVPIN.

Residues 13-271 enclose the Protein kinase domain; the sequence is YQLFEELGKG…AAEAPKHPWI (259 aa). Residues 19-27 and Lys42 each bind ATP; that span reads LGKGAFSVV. Residue Asp135 is the Proton acceptor of the active site. Phosphothreonine is present on Thr286. Phosphoserine occurs at positions 314 and 318. 2 disordered regions span residues 324 to 375 and 392 to 413; these read PDGV…TIED and WQPS…SSVQ. A compositionally biased stretch (polar residues) spans 330 to 340; it reads NNKTNLASSPK. Thr372 carries the phosphothreonine modification.

This sequence belongs to the protein kinase superfamily. CAMK Ser/Thr protein kinase family. CaMK subfamily. As to quaternary structure, CAMK2 is composed of four different chains: alpha, beta, gamma, and delta. The different isoforms assemble into homo- or heteromultimeric holoenzymes composed of 8 to 12 subunits. First detected at 18 hpf. At 24 hpf, expressed in discrete anterior locations and along either side of the midline. At 48 hpf, expression is predominantly in the forebrain, and then accumulates in the forebrain, hindbrain, and retinal epithelium at 72 hpf.

The enzyme catalyses L-seryl-[protein] + ATP = O-phospho-L-seryl-[protein] + ADP + H(+). The catalysed reaction is L-threonyl-[protein] + ATP = O-phospho-L-threonyl-[protein] + ADP + H(+). Its activity is regulated as follows. Autophosphorylation of CAMK2 plays an important role in the regulation of the kinase activity. In terms of biological role, caM-kinase II (CAMK2) is a prominent kinase in the central nervous system. The polypeptide is Calcium/calmodulin-dependent protein kinase type II delta 2 chain (camk2d2) (Danio rerio (Zebrafish)).